The primary structure comprises 43 residues: Avenin-F (43 aa).

Positions 1 to 23 (TTTVQYDPSEQYQPYPEQQEPFV) are disordered. Residues 10 to 23 (EQYQPYPEQQEPFV) are compositionally biased toward low complexity. Copy 1 of the repeat occupies 21-26 (PFVQQQ). Positions 21–40 (PFVQQQPPFVQQQQPFVQQQ) are 3 X 6 aa tandem repeats of P-F-V-Q-Q-Q. Residues 27 to 34 (PPFVQQQQ) form a 2; approximate repeat. Copy 3 of the repeat occupies 35–40 (PFVQQQ).

This sequence belongs to the gliadin/glutenin family. As to quaternary structure, monomer.

The protein localises to the vacuole. Its subcellular location is the aleurone grain. Functionally, seed storage protein. Serves as a source of nitrogen, carbon, and sulfur for the young developing seedling. The polypeptide is Avenin-F (Avena sativa (Oat)).